Reading from the N-terminus, the 315-residue chain is Microtubule-associated protein Jupiter (315 aa).

Over residues 1–14 (MISNFDCTDNQASS) the composition is skewed to polar residues. Disordered regions lie at residues 1-37 (MISN…QTPR) and 51-89 (EKDN…PGKN). S24 carries the phosphoserine modification. Residue T35 is modified to Phosphothreonine. Over residues 62–76 (APRRGQKTVDSHSRL) the composition is skewed to basic and acidic residues. Phosphothreonine is present on residues T81 and T85. Phosphoserine is present on residues S94, S122, and S133. 2 disordered regions span residues 116–166 (YNGK…ADDA) and 272–315 (EGNP…SGLW). Positions 120-133 (SGSVSSASSSVSSS) are enriched in low complexity. Composition is skewed to polar residues over residues 134 to 148 (TENL…SVFR) and 285 to 296 (DFTQRQESSNGG).

The protein belongs to the MAP Jupiter family.

Its subcellular location is the nucleus. The protein localises to the cytoplasm. It localises to the cytoskeleton. The protein resides in the spindle. In terms of biological role, binds to all microtubule populations. The polypeptide is Microtubule-associated protein Jupiter (Drosophila sechellia (Fruit fly)).